Here is a 279-residue protein sequence, read N- to C-terminus: Acetyl-coenzyme A carboxylase carboxyl transferase subunit beta (279 aa).

The 257-residue stretch at 23–279 (LWSKCDECGA…LIKLFKHLRG (257 aa)) folds into the CoA carboxyltransferase N-terminal domain. The Zn(2+) site is built by cysteine 27, cysteine 30, cysteine 46, and cysteine 49. Residues 27-49 (CDECGAALHKKQLEDHLYTCPEC) form a C4-type zinc finger.

This sequence belongs to the AccD/PCCB family. Acetyl-CoA carboxylase is a heterohexamer composed of biotin carboxyl carrier protein (AccB), biotin carboxylase (AccC) and two subunits each of ACCase subunit alpha (AccA) and ACCase subunit beta (AccD). Requires Zn(2+) as cofactor.

Its subcellular location is the cytoplasm. It carries out the reaction N(6)-carboxybiotinyl-L-lysyl-[protein] + acetyl-CoA = N(6)-biotinyl-L-lysyl-[protein] + malonyl-CoA. It functions in the pathway lipid metabolism; malonyl-CoA biosynthesis; malonyl-CoA from acetyl-CoA: step 1/1. Its function is as follows. Component of the acetyl coenzyme A carboxylase (ACC) complex. Biotin carboxylase (BC) catalyzes the carboxylation of biotin on its carrier protein (BCCP) and then the CO(2) group is transferred by the transcarboxylase to acetyl-CoA to form malonyl-CoA. In Chlorobaculum parvum (strain DSM 263 / NCIMB 8327) (Chlorobium vibrioforme subsp. thiosulfatophilum), this protein is Acetyl-coenzyme A carboxylase carboxyl transferase subunit beta.